The chain runs to 1070 residues: Carbamoyl phosphate synthase large chain (1070 aa).

Residues 1-401 form a carboxyphosphate synthetic domain region; sequence MPKRDDIKTI…ALLKAVRSLE (401 aa). The ATP site is built by arginine 129, arginine 169, glycine 175, glycine 176, lysine 208, isoleucine 210, glutamate 215, glycine 241, isoleucine 242, histidine 243, glutamine 284, and glutamate 298. An ATP-grasp 1 domain is found at 133-327; that stretch reads RDLMNELGEP…IAKLAAKIAV (195 aa). Mg(2+) is bound by residues glutamine 284, glutamate 298, and asparagine 300. Mn(2+) contacts are provided by glutamine 284, glutamate 298, and asparagine 300. The interval 402–546 is oligomerization domain; the sequence is IGADHLLLEE…YSTYEDENES (145 aa). Positions 547–929 are carbamoyl phosphate synthetic domain; that stretch reads IRSSKESVIV…ALYKGFVASG (383 aa). Residues 671–861 form the ATP-grasp 2 domain; sequence EKALEILQIP…MANVATRVIL (191 aa). Residues arginine 707, arginine 746, valine 748, glutamate 752, glycine 777, valine 778, histidine 779, serine 780, glutamine 820, and glutamate 832 each contribute to the ATP site. Residues glutamine 820, glutamate 832, and asparagine 834 each contribute to the Mg(2+) site. Mn(2+) is bound by residues glutamine 820, glutamate 832, and asparagine 834. The MGS-like domain maps to 930 to 1070; that stretch reads TTMHDYGTVL…SEVKQPKARV (141 aa). The interval 930–1070 is allosteric domain; the sequence is TTMHDYGTVL…SEVKQPKARV (141 aa).

This sequence belongs to the CarB family. As to quaternary structure, composed of two chains; the small (or glutamine) chain promotes the hydrolysis of glutamine to ammonia, which is used by the large (or ammonia) chain to synthesize carbamoyl phosphate. Tetramer of heterodimers (alpha,beta)4. Requires Mg(2+) as cofactor. It depends on Mn(2+) as a cofactor.

It catalyses the reaction hydrogencarbonate + L-glutamine + 2 ATP + H2O = carbamoyl phosphate + L-glutamate + 2 ADP + phosphate + 2 H(+). The enzyme catalyses hydrogencarbonate + NH4(+) + 2 ATP = carbamoyl phosphate + 2 ADP + phosphate + 2 H(+). It functions in the pathway amino-acid biosynthesis; L-arginine biosynthesis; carbamoyl phosphate from bicarbonate: step 1/1. The protein operates within pyrimidine metabolism; UMP biosynthesis via de novo pathway; (S)-dihydroorotate from bicarbonate: step 1/3. Large subunit of the glutamine-dependent carbamoyl phosphate synthetase (CPSase). CPSase catalyzes the formation of carbamoyl phosphate from the ammonia moiety of glutamine, carbonate, and phosphate donated by ATP, constituting the first step of 2 biosynthetic pathways, one leading to arginine and/or urea and the other to pyrimidine nucleotides. The large subunit (synthetase) binds the substrates ammonia (free or transferred from glutamine from the small subunit), hydrogencarbonate and ATP and carries out an ATP-coupled ligase reaction, activating hydrogencarbonate by forming carboxy phosphate which reacts with ammonia to form carbamoyl phosphate. The protein is Carbamoyl phosphate synthase large chain of Listeria innocua serovar 6a (strain ATCC BAA-680 / CLIP 11262).